The following is a 548-amino-acid chain: LDL receptor repeat-containing protein egg-2 (548 aa).

At 1-49 (MSQQAGNAQRGRFDEEPMSLGEKISHRMDQLKEIVSSSCPCAGKFPPVA) the chain is on the cytoplasmic side. Residues 50–70 (IVLIVALIILGVIIAVPLVIF) form a helical; Signal-anchor for type II membrane protein membrane-spanning segment. Over 71 to 548 (LSPSAQAMSS…LALKNSGLRP (478 aa)) the chain is Extracellular. An N-linked (GlcNAc...) asparagine glycan is attached at asparagine 119. 8 consecutive LDL-receptor class A domains span residues 122-160 (TCSG…ENCK), 161-213 (ECQS…ASCR), 215-252 (KCSK…SNCN), 253-288 (KCQK…HQCD), 291-328 (TCSG…ENCP), 370-412 (KCDP…KKCT), 416-454 (ECVV…KGCD), and 455-492 (KCPS…HKCS). Intrachain disulfides connect cysteine 130/cysteine 150, cysteine 144/cysteine 159, cysteine 162/cysteine 190, cysteine 168/cysteine 203, cysteine 197/cysteine 212, cysteine 216/cysteine 229, cysteine 223/cysteine 242, cysteine 236/cysteine 251, cysteine 254/cysteine 265, cysteine 261/cysteine 278, cysteine 272/cysteine 287, cysteine 292/cysteine 305, cysteine 300/cysteine 318, cysteine 312/cysteine 327, cysteine 371/cysteine 389, cysteine 379/cysteine 402, cysteine 396/cysteine 411, cysteine 417/cysteine 431, cysteine 427/cysteine 444, cysteine 438/cysteine 453, cysteine 456/cysteine 469, cysteine 463/cysteine 482, and cysteine 476/cysteine 491. N-linked (GlcNAc...) asparagine glycosylation is present at asparagine 244. Asparagine 527 carries N-linked (GlcNAc...) asparagine glycosylation.

It is found in the cell membrane. The protein resides in the endosome membrane. Functionally, probable receptor which is required for the oocyte-to-zygote transition although its exact function is controversial. Redundantly with egg-1, seems to be required for fertilization probably by promoting the interaction or fusion between sperm and oocyte. Conversely, shown to be dispensable for fertilization but required together with egg-1 for the formation of a continuous and cohesive eggshell chitin layer by maintaining a homogenous distribution of chitin synthase chs-1 at the unfertilized oocyte cell membrane. Appears to recruit or maintain together to the unfertilized oocyte cortex several proteins including chs-1, kinase mbk-2 and pseudophosphatase egg-3, and possibly egg-4 and egg-5. This chain is LDL receptor repeat-containing protein egg-2, found in Caenorhabditis elegans.